Reading from the N-terminus, the 311-residue chain is Aspartate carbamoyltransferase catalytic subunit (311 aa).

Carbamoyl phosphate is bound by residues Arg-59 and Thr-60. Lys-87 contributes to the L-aspartate binding site. Residues Arg-109, His-139, and Gln-142 each coordinate carbamoyl phosphate. The L-aspartate site is built by Arg-172 and Arg-224. Residues Ala-265 and Pro-266 each contribute to the carbamoyl phosphate site.

This sequence belongs to the aspartate/ornithine carbamoyltransferase superfamily. ATCase family. In terms of assembly, heterododecamer (2C3:3R2) of six catalytic PyrB chains organized as two trimers (C3), and six regulatory PyrI chains organized as three dimers (R2).

The catalysed reaction is carbamoyl phosphate + L-aspartate = N-carbamoyl-L-aspartate + phosphate + H(+). Its pathway is pyrimidine metabolism; UMP biosynthesis via de novo pathway; (S)-dihydroorotate from bicarbonate: step 2/3. Functionally, catalyzes the condensation of carbamoyl phosphate and aspartate to form carbamoyl aspartate and inorganic phosphate, the committed step in the de novo pyrimidine nucleotide biosynthesis pathway. This chain is Aspartate carbamoyltransferase catalytic subunit, found in Streptococcus pyogenes serotype M1.